A 247-amino-acid chain; its full sequence is ATP synthase subunit a, chloroplastic (247 aa).

Transmembrane regions (helical) follow at residues Gln38–Val58, Val95–Leu115, Ile134–Ser154, Leu199–Leu219, and Gly220–Gly240.

This sequence belongs to the ATPase A chain family. In terms of assembly, F-type ATPases have 2 components, CF(1) - the catalytic core - and CF(0) - the membrane proton channel. CF(1) has five subunits: alpha(3), beta(3), gamma(1), delta(1), epsilon(1). CF(0) has four main subunits: a, b, b' and c.

Its subcellular location is the plastid. The protein resides in the chloroplast thylakoid membrane. Its function is as follows. Key component of the proton channel; it plays a direct role in the translocation of protons across the membrane. This chain is ATP synthase subunit a, chloroplastic, found in Oenothera argillicola (Appalachian evening primrose).